A 337-amino-acid chain; its full sequence is Protein-glutamate methylesterase/protein-glutamine glutaminase of group 3 operon (337 aa).

The Response regulatory domain occupies 2 to 119 (KIAIVNDMPL…GDAREAAAPL (118 aa)). D53 carries the post-translational modification 4-aspartylphosphate. One can recognise a CheB-type methylesterase domain in the interval 144–337 (PLREASQRRG…AGRLTEFFAK (194 aa)). Catalysis depends on residues S160, H187, and D280.

It belongs to the CheB family. In terms of processing, phosphorylated by CheA. Phosphorylation of the N-terminal regulatory domain activates the methylesterase activity.

Its subcellular location is the cytoplasm. The catalysed reaction is [protein]-L-glutamate 5-O-methyl ester + H2O = L-glutamyl-[protein] + methanol + H(+). The enzyme catalyses L-glutaminyl-[protein] + H2O = L-glutamyl-[protein] + NH4(+). Involved in chemotaxis. Part of a chemotaxis signal transduction system that modulates chemotaxis in response to various stimuli. Catalyzes the demethylation of specific methylglutamate residues introduced into the chemoreceptors (methyl-accepting chemotaxis proteins or MCP) by CheR. Also mediates the irreversible deamidation of specific glutamine residues to glutamic acid. The sequence is that of Protein-glutamate methylesterase/protein-glutamine glutaminase of group 3 operon from Pseudomonas putida (strain ATCC 47054 / DSM 6125 / CFBP 8728 / NCIMB 11950 / KT2440).